A 192-amino-acid polypeptide reads, in one-letter code: MAKVLLIVFIMVYAGSCAIWVSQPPEIRAQEGTTASLPCSFNASRGKAAIGSATWYQDKVAPGMELSNVTPGFRGRVASFSASQFIRGHKAGLLIQDIQSHDARIYVCRVEVLGLGVGTGNGTRLVVEKEPPQQASNAEPERAAYTSLLLRAGVYALSFLSVATGSVIYYQGKCLCHVGNTATPPTASEERF.

The signal sequence occupies residues 1-18; it reads MAKVLLIVFIMVYAGSCA. One can recognise an Ig-like domain in the interval 19–126; it reads IWVSQPPEIR…VGTGNGTRLV (108 aa). The Extracellular portion of the chain corresponds to 19–147; it reads IWVSQPPEIR…AEPERAAYTS (129 aa). Residues C39 and C108 are joined by a disulfide bond. N42 and N121 each carry an N-linked (GlcNAc...) asparagine glycan. Residues 148–168 traverse the membrane as a helical segment; sequence LLLRAGVYALSFLSVATGSVI. Topologically, residues 169–192 are cytoplasmic; the sequence is YYQGKCLCHVGNTATPPTASEERF.

Belongs to the natural cytotoxicity receptor (NCR) family. In terms of assembly, homodimer in the unliganted form. Interacts with CD3Z. Interacts with and is activated by binding to NCR3LG1. Interacts with and is activated by binding to BAG6. Interacts with and is inhibited by binding to LGALS3.

The protein localises to the cell membrane. Its function is as follows. Cell membrane receptor of natural killer/NK cells that is activated by binding of extracellular ligands including BAG6 and NCR3LG1. Stimulates NK cells cytotoxicity toward neighboring cells producing these ligands. It controls, for instance, NK cells cytotoxicity against tumor cells. Engagement of NCR3 by BAG6 also promotes myeloid dendritic cells (DC) maturation, both through killing DCs that did not acquire a mature phenotype, and inducing the release by NK cells of TNFA and IFNG that promote DC maturation. This Rattus norvegicus (Rat) protein is Natural cytotoxicity triggering receptor 3 (Ncr3).